We begin with the raw amino-acid sequence, 163 residues long: Interleukin-17F (163 aa).

The N-terminal stretch at 1 to 30 (MTVKTLHGPAMVKYLLLSILGLAFLSEAAA) is a signal peptide. Asn-83 carries N-linked (GlcNAc...) asparagine glycosylation. Disulfide bonds link Cys-102-Cys-152 and Cys-107-Cys-154.

Belongs to the IL-17 family. In terms of assembly, homodimer; disulfide-linked. Heterodimer with IL17A (IL17A-IL17F). Forms complexes with IL17RA and IL17RC receptors with 2:1 binding stoichiometry: two receptor chains for one interleukin molecule. IL17F homodimer forms predominantly complexes with IL17RC homodimer, whereas IL17A-IL17F favors complexes with IL17RA-IL17RC. IL17RA and IL17RC chains cannot distinguish between IL17A and IL17F molecules, potentially enabling the formation of topologically distinct complexes. As to expression, expressed in T-helper 1 and T-helper 2 cells, basophils and mast cells.

It is found in the secreted. In terms of biological role, effector cytokine of innate and adaptive immune system involved in antimicrobial host defense and maintenance of tissue integrity. IL17A-IL17F signals via IL17RA-IL17RC heterodimeric receptor complex, triggering homotypic interaction of IL17RA and IL17RC chains with TRAF3IP2 adapter through SEFIR domains. This leads to downstream TRAF6-mediated activation of NF-kappa-B and MAPkinase pathways ultimately resulting in transcriptional activation of cytokines, chemokines, antimicrobial peptides and matrix metalloproteinases, with potential strong immune inflammation. IL17A-IL17F is primarily involved in host defense against extracellular bacteria and fungi by inducing neutrophilic inflammation. As signature effector cytokine of T-helper 17 cells (Th17), primarily induces neutrophil activation and recruitment at infection and inflammatory sites. Stimulates the production of antimicrobial beta-defensins DEFB1, DEFB103A, and DEFB104A by mucosal epithelial cells, limiting the entry of microbes through the epithelial barriers. IL17F homodimer can signal via IL17RC homodimeric receptor complex, triggering downstream activation of TRAF6 and NF-kappa-B signaling pathway. Via IL17RC induces transcriptional activation of IL33, a potent cytokine that stimulates group 2 innate lymphoid cells and adaptive T-helper 2 cells involved in pulmonary allergic response to fungi. Likely via IL17RC, promotes sympathetic innervation of peripheral organs by coordinating the communication between gamma-delta T cells and parenchymal cells. Stimulates sympathetic innervation of thermogenic adipose tissue by driving TGFB1 expression. Regulates the composition of intestinal microbiota and immune tolerance by inducing antimicrobial proteins that specifically control the growth of commensal Firmicutes and Bacteroidetes. In Homo sapiens (Human), this protein is Interleukin-17F (IL17F).